Here is a 292-residue protein sequence, read N- to C-terminus: GTP cyclohydrolase FolE2 (292 aa).

The protein belongs to the GTP cyclohydrolase IV family.

The enzyme catalyses GTP + H2O = 7,8-dihydroneopterin 3'-triphosphate + formate + H(+). It participates in cofactor biosynthesis; 7,8-dihydroneopterin triphosphate biosynthesis; 7,8-dihydroneopterin triphosphate from GTP: step 1/1. Its function is as follows. Converts GTP to 7,8-dihydroneopterin triphosphate. The protein is GTP cyclohydrolase FolE2 of Staphylococcus carnosus (strain TM300).